Here is a 439-residue protein sequence, read N- to C-terminus: Xylose isomerase (439 aa).

Catalysis depends on residues His101 and Asp104. 7 residues coordinate Mg(2+): Glu232, Glu268, His271, Asp296, Asp307, Asp309, and Asp339.

Belongs to the xylose isomerase family. As to quaternary structure, homotetramer. The cofactor is Mg(2+).

It localises to the cytoplasm. It catalyses the reaction alpha-D-xylose = alpha-D-xylulofuranose. The chain is Xylose isomerase from Pseudoalteromonas atlantica (strain T6c / ATCC BAA-1087).